We begin with the raw amino-acid sequence, 458 residues long: Carboxypeptidase N catalytic chain (458 aa).

The signal sequence occupies residues 1–20; it reads MSDLLSVFLHLLLLFKLVAP. The Peptidase M14 domain occupies 24-338; it reads RHHRYDDLVR…EALIQFLEQV (315 aa). Cys-42 and Cys-104 form a disulfide bridge. The Zn(2+) site is built by His-86, Glu-89, and His-216. Residues Cys-271 and Cys-311 are joined by a disulfide bond. Glu-308 acts as the Proton donor/acceptor in catalysis. Residues Thr-400, Thr-402, and Thr-409 are each glycosylated (O-linked (GalNAc...) threonine). Residues 423-458 form a disordered region; sequence SPVRRAPSRRHGVRAKVQPQARKKEMEMRQLQRGPA.

This sequence belongs to the peptidase M14 family. Tetramer of two catalytic chains and two glycosylated inactive chains. It depends on Zn(2+) as a cofactor. As to expression, synthesized in the liver and secreted in plasma.

The protein localises to the secreted. The protein resides in the extracellular space. The catalysed reaction is Release of a C-terminal basic amino acid, preferentially lysine.. Protects the body from potent vasoactive and inflammatory peptides containing C-terminal Arg or Lys (such as kinins or anaphylatoxins) which are released into the circulation. This Homo sapiens (Human) protein is Carboxypeptidase N catalytic chain (CPN1).